A 484-amino-acid chain; its full sequence is Cobyric acid synthase (484 aa).

Positions V248–S435 constitute a GATase cobBQ-type domain. C329 serves as the catalytic Nucleophile. H427 is an active-site residue.

This sequence belongs to the CobB/CobQ family. CobQ subfamily.

It participates in cofactor biosynthesis; adenosylcobalamin biosynthesis. In terms of biological role, catalyzes amidations at positions B, D, E, and G on adenosylcobyrinic A,C-diamide. NH(2) groups are provided by glutamine, and one molecule of ATP is hydrogenolyzed for each amidation. This chain is Cobyric acid synthase, found in Pseudomonas putida (strain GB-1).